Here is a 261-residue protein sequence, read N- to C-terminus: MKLVADVGNTNTVFGIWNRGKILKNWRISTGRLETEDEMYVVLKQLLEAGNVDLKSIEDICVASVVPRLNSIFHYFGRKYLELDPVLVTAIDGIGVKWDVDFPSEIGADRVANVIGAHEFYGKDAIVIDTGTAITVDVLKDGAFIGGAILPGPMMAMRALFSKTAKLPEVDLFYVENHIGKNTEDNIRIGVVNGTYYALKAIISKVKEELGDKIPVIATGGNSPMFNIGNGFFDILDSDLTLKGIAVFCERVRKLEKNSAG.

6-13 (DVGNTNTV) lines the ATP pocket. 107–110 (GADR) contacts substrate. The active-site Proton acceptor is D109. K(+) is bound at residue D129. Residue T132 coordinates ATP. Substrate is bound at residue T183.

It belongs to the type III pantothenate kinase family. In terms of assembly, homodimer. It depends on NH4(+) as a cofactor. K(+) serves as cofactor.

It localises to the cytoplasm. The enzyme catalyses (R)-pantothenate + ATP = (R)-4'-phosphopantothenate + ADP + H(+). It functions in the pathway cofactor biosynthesis; coenzyme A biosynthesis; CoA from (R)-pantothenate: step 1/5. Its function is as follows. Catalyzes the phosphorylation of pantothenate (Pan), the first step in CoA biosynthesis. The protein is Type III pantothenate kinase of Kosmotoga olearia (strain ATCC BAA-1733 / DSM 21960 / TBF 19.5.1).